The sequence spans 285 residues: NADPH-dependent 7-cyano-7-deazaguanine reductase (285 aa).

91-93 is a binding site for substrate; the sequence is IES. 93–94 is an NADPH binding site; the sequence is SK. Cys-191 (thioimide intermediate) is an active-site residue. Asp-198 functions as the Proton donor in the catalytic mechanism. Substrate is bound at residue 230-231; the sequence is HE. 259–260 contacts NADPH; it reads RG.

This sequence belongs to the GTP cyclohydrolase I family. QueF type 2 subfamily. Homodimer.

The protein resides in the cytoplasm. The catalysed reaction is 7-aminomethyl-7-carbaguanine + 2 NADP(+) = 7-cyano-7-deazaguanine + 2 NADPH + 3 H(+). It participates in tRNA modification; tRNA-queuosine biosynthesis. In terms of biological role, catalyzes the NADPH-dependent reduction of 7-cyano-7-deazaguanine (preQ0) to 7-aminomethyl-7-deazaguanine (preQ1). This is NADPH-dependent 7-cyano-7-deazaguanine reductase from Legionella pneumophila (strain Corby).